A 675-amino-acid chain; its full sequence is MAPLQFQPLASQPTPAFWAALAAHKLNHLKLDDSHLPITAQIEPAKRVLINKERVDDTADVGIDGSLVVGGDAFEAERGRLPPNAVSVTGTLKIFNTIEEFKDTSAKKRLFDDLVSQMLESFDTDRPVLNPFLLVTFADLKKYVYHYWFAFPALVSSPAWVMDGEFMPVDEIEDIRKLAQSHFQHNTTAFLLKGAAPHLSAAPLSSCSTFYDKTQSEMVTVVFHDTSSLPSNPGWGLRNVLYYLSAKHGITSLVVICLREGSSSTQASLSLSSPPSTAPAKPPQAVGWERHPSGKLSPRVADLGPMMDPTRLAAQAVDLNLKLIKWRLLPALDLDKISGTRCLLLGAGTLGCYVARILMGWGVRNITLVDSSTVSYSNPVRQPLFTFSDCLNGGLPKAPTAAKKLQEIFPGVNAQGVVLGIPMPGHPISSSDDAVEKDVAKLEALVKSHDAVFLLMDSRESRWLPTVLGRKWGKVVVNAALGFDSFLVMRHGAGAGAGARRIQSDEGGVGEKGLGCYYCNDIVAPTDSLSDRTLDQMCTVTRPGVAPIAAAMAVELLISVLQHPLGVHAPAERPDTAETSTSTKTSPLGCVPHQLRGQMYQWKTQIVEGEAFDRCTGCSDYVLNEYETNGFAFLRRVFNEKDYLEKVTGLDELYRESEKVIEGMEGLDWDSEGEE.

The tract at residues 268–293 (SLSLSSPPSTAPAKPPQAVGWERHPS) is disordered. The short motif at 346–351 (GAGTLG) is the GXGXXG motif element. Residue Cys-538 is the Glycyl thioester intermediate of the active site.

This sequence belongs to the ATG7 family. As to quaternary structure, homodimer.

It localises to the cytoplasm. The protein localises to the preautophagosomal structure. In terms of biological role, E1-like activating enzyme involved in the 2 ubiquitin-like systems required for cytoplasm to vacuole transport (Cvt) and autophagy. Activates ATG12 for its conjugation with ATG5 and ATG8 for its conjugation with phosphatidylethanolamine. Both systems are needed for the ATG8 association to Cvt vesicles and autophagosomes membranes. Autophagy is essential for maintenance of amino acid levels and protein synthesis under nitrogen starvation. Required for selective autophagic degradation of the nucleus (nucleophagy) as well as for mitophagy which contributes to regulate mitochondrial quantity and quality by eliminating the mitochondria to a basal level to fulfill cellular energy requirements and preventing excess ROS production. Plays a role in the regulation of filamentous growth and chronological longevity. The sequence is that of Ubiquitin-like modifier-activating enzyme ATG7 (ATG7) from Cryptococcus neoformans var. neoformans serotype D (strain JEC21 / ATCC MYA-565) (Filobasidiella neoformans).